A 438-amino-acid chain; its full sequence is Malic acid transport protein (438 aa).

10 helical membrane passes run 37-57 (SWFACTMATGGVGLIIGSFPF), 65-85 (IGKIVYILQIFLFSLFGSCML), 106-126 (LFIATCLLSISTFIDMLAIYA), 140-160 (ILYYIYVAVSFIYCVMAFFTI), 172-192 (SPAWILPIFPPMICGVIAGAV), 205-225 (VIFGILFQGLGFWVYLLLFAV), 242-262 (PGMFMFVGPPAFSGLALINIA), 288-308 (FMAIFIWGLAAWCYCLAMVSF), 321-341 (ACGWFAFIFPNVGFVNCTIEI), and 353-373 (FGHIIGVILCIQWILLMYLMV). The disordered stretch occupies residues 390 to 438 (AHPPPKPNTGVLNPTFPPEKAPASLEKVDTHVTSTGGESDPPSSEHESV). Residues S413, S423, S428, S432, S433, and S437 each carry the phosphoserine modification.

This sequence belongs to the tellurite-resistance/dicarboxylate transporter (TDT) family.

It localises to the membrane. Permease for malate and other C4 dicarboxylic acids. The chain is Malic acid transport protein (mae1) from Schizosaccharomyces pombe (strain 972 / ATCC 24843) (Fission yeast).